Consider the following 379-residue polypeptide: Chaperone protein DnaJ (379 aa).

In terms of domain architecture, J spans 5-70 (DYYEVLGVGK…EKKAAYDQYG (66 aa)). The segment at 139–217 (GHEAQIRVPH…CHGQGKLKSQ (79 aa)) adopts a CR-type zinc-finger fold. Zn(2+) is bound by residues C152, C155, C169, C172, C191, C194, C205, and C208. 4 CXXCXGXG motif repeats span residues 152 to 159 (CEHCHGNG), 169 to 176 (CPTCNGVG), 191 to 198 (CPKCHGSG), and 205 to 212 (CTKCHGQG).

This sequence belongs to the DnaJ family. In terms of assembly, homodimer. It depends on Zn(2+) as a cofactor.

It is found in the cytoplasm. Functionally, participates actively in the response to hyperosmotic and heat shock by preventing the aggregation of stress-denatured proteins and by disaggregating proteins, also in an autonomous, DnaK-independent fashion. Unfolded proteins bind initially to DnaJ; upon interaction with the DnaJ-bound protein, DnaK hydrolyzes its bound ATP, resulting in the formation of a stable complex. GrpE releases ADP from DnaK; ATP binding to DnaK triggers the release of the substrate protein, thus completing the reaction cycle. Several rounds of ATP-dependent interactions between DnaJ, DnaK and GrpE are required for fully efficient folding. Also involved, together with DnaK and GrpE, in the DNA replication of plasmids through activation of initiation proteins. The protein is Chaperone protein DnaJ of Cupriavidus metallidurans (strain ATCC 43123 / DSM 2839 / NBRC 102507 / CH34) (Ralstonia metallidurans).